The following is a 242-amino-acid chain: Myogenic factor 6 (242 aa).

The interval 31–63 (SPLYPGSDGTLSPCQDQMPQEAGSDSSGEEHVL) is disordered. Residues 39–56 (GTLSPCQDQMPQEAGSDS) are compositionally biased toward polar residues. Positions 93–144 (DRRKAATLRERRRLKKINEAFEALKRRTVANPNQRLPKVEILRSAISYIERL) constitute a bHLH domain.

As to quaternary structure, efficient DNA binding requires dimerization with another bHLH protein. Interacts with CSRP3. Skeletal muscle.

The protein localises to the nucleus. Involved in muscle differentiation (myogenic factor). Induces fibroblasts to differentiate into myoblasts. Probable sequence specific DNA-binding protein. In Mus musculus (Mouse), this protein is Myogenic factor 6 (Myf6).